A 407-amino-acid chain; its full sequence is MTTATQTDIVIAGAGIGGLTTALALHAQGIERVVVLESANEIRPLGVGINVQPAAIAQLFALGLGEAIAATGIATRELRYLDHAGITLWTEPRGLAAGDPYPQYAIHRGELQMLLLAAVRERLGADTVRTGLRVQDFEHTRTGIRVHAQERGNGGSTVSFEATALVGADGLHSAVRARLHPDRCELLPARIQMWRGLTEVDEFLDGRSMIVANDDRSTRLIAYPCSARHAQHGRALINWVCMVPDVAQDLTREASWDCSGQLKDVLPYFADWKFGWLDVPDLLSRSTQILEYPMVDRDPLPRWGIGRATLLGDAAHLMYPVGANGASQAILDAVSLANELGDNSDTVEALQRYEAVRRPPTTAIVQANRDRDTAERAIATRPDPEKTAALAAITSSYRSIVDRSHVQ.

Positions 17, 134, and 313 each coordinate FAD.

Requires FAD as cofactor.

It catalyses the reaction phenazine-1,6-dicarboxylate + NADH + O2 + 2 H(+) = 6-hydroxyphenazine-1-carboxylate + CO2 + NAD(+) + H2O. It carries out the reaction 6-hydroxyphenazine-1-carboxylate + NADH + O2 + 2 H(+) = 1,6-dihydroxyphenazine + CO2 + NAD(+) + H2O. The enzyme catalyses phenazine-1-carboxylate + NADH + O2 + 2 H(+) = 1-hydroxyphenazine + CO2 + NAD(+) + H2O. Functionally, involved in the biosynthesis of phenazine natural products including myxin, an N(5),N(10)-dioxide phenazine antiobiotic, which has antimicrobial activity. Catalyzes the decarboxylative hydroxylations of phenazine 1,6-dicarboxylic acid (PDC) to produce 1,6-dihydroxyphenazine (DHP). Low activity with phenazine 1-carboxylic acid (PCA) to produce 1-hydroxyphenazine. This is Phenazine 1,6-dicarboxylic acid hydroxylase PhzS from Lysobacter antibioticus.